Reading from the N-terminus, the 1026-residue chain is Multidrug resistance protein MdtC (1026 aa).

Transmembrane regions (helical) follow at residues 15-35 (ILIA…LPVA), 333-353 (EVEE…FLFL), 360-380 (LIPA…MYLC), 387-407 (LSLM…IVVL), 431-451 (VGFT…PLLL), 463-483 (FAVT…TLTP), 528-548 (LVGV…IAIP), 853-873 (LILI…LYES), 897-917 (LFNA…IGIV), 953-973 (PIMM…LSGG), and 984-1004 (ITIV…TPVV).

This sequence belongs to the resistance-nodulation-cell division (RND) (TC 2.A.6) family. MdtC subfamily. As to quaternary structure, part of a tripartite efflux system composed of MdtA, MdtB and MdtC. MdtC forms a heteromultimer with MdtB.

The protein localises to the cell inner membrane. In Salmonella arizonae (strain ATCC BAA-731 / CDC346-86 / RSK2980), this protein is Multidrug resistance protein MdtC.